The sequence spans 199 residues: Transcriptional regulatory protein DesR (199 aa).

The region spanning 3 to 117 is the Response regulatory domain; that stretch reads SIFIAEDQQM…ELANAIRSVM (115 aa). Residue Asp-54 is modified to 4-aspartylphosphate. The HTH luxR-type domain occupies 131–196; the sequence is LYSEANPLTD…EAITRSKEKG (66 aa). The H-T-H motif DNA-binding region spans 155 to 174; sequence TKEIAQELSIKSGTVRNYIS.

In terms of processing, phosphorylated by DesK.

Its subcellular location is the cytoplasm. In terms of biological role, member of the two-component regulatory system DesR/DesK, responsible for cold induction of the des gene coding for the Delta5 acyl-lipid desaturase. The chain is Transcriptional regulatory protein DesR (desR) from Bacillus subtilis (strain 168).